Reading from the N-terminus, the 247-residue chain is LOB domain-containing protein 38 (247 aa).

Positions 1-107 constitute an LOB domain; sequence MSCNGCRVLR…VETVLRGGSL (107 aa). Low complexity predominate over residues 157–170; sequence FSSSRSRSRSTASP. Residues 157 to 184 form a disordered region; it reads FSSSRSRSRSTASPPKRKRLSSEQQPSS.

Belongs to the LOB domain-containing protein family. In terms of tissue distribution, expressed in young shoots, roots, stems, leaves and flowers.

The protein is LOB domain-containing protein 38 (LBD38) of Arabidopsis thaliana (Mouse-ear cress).